We begin with the raw amino-acid sequence, 460 residues long: Phosphoglucomutase (460 aa).

Residue S103 is the Phosphoserine intermediate of the active site. Mg(2+) is bound at residue S103. Residues 103–104 (SH) and K113 each bind substrate. The Mg(2+) site is built by D239, D241, and D243. Substrate contacts are provided by residues 243-244 (DR), T303, and 322-324 (EMS).

The protein belongs to the phosphohexose mutase family. Mg(2+) serves as cofactor.

It is found in the cytoplasm. It catalyses the reaction alpha-D-glucose 1-phosphate = alpha-D-glucose 6-phosphate. This enzyme participates in both the breakdown and synthesis of glucose. The protein is Phosphoglucomutase (pgm) of Neisseria gonorrhoeae.